The sequence spans 318 residues: Curved DNA-binding protein (318 aa).

The J domain occupies 5-69 (DYYKILGVEP…QKRAEFDEIR (65 aa)). The segment at 111–130 (GGGNPFGGARQQQRSAGRRG) is disordered.

Its subcellular location is the cytoplasm. The protein localises to the nucleoid. Its function is as follows. DNA-binding protein that preferentially recognizes a curved DNA sequence. It is probably a functional analog of DnaJ; displays overlapping activities with DnaJ, but functions under different conditions, probably acting as a molecular chaperone in an adaptive response to environmental stresses other than heat shock. Lacks autonomous chaperone activity; binds native substrates and targets them for recognition by DnaK. Its activity is inhibited by the binding of CbpM. The protein is Curved DNA-binding protein of Pseudomonas putida (strain GB-1).